Reading from the N-terminus, the 147-residue chain is Hemoglobin larval subunit beta-1 (147 aa).

In terms of domain architecture, Globin spans 3-147 (HLSADEKSAI…LVAALSHGYF (145 aa)). Heme b contacts are provided by histidine 64 and histidine 93.

It belongs to the globin family. Heterotetramer of two alpha chains and two beta chains. As to expression, red blood cells.

Functionally, this is a larval (tadpole) beta-globin. This chain is Hemoglobin larval subunit beta-1, found in Xenopus laevis (African clawed frog).